Here is a 227-residue protein sequence, read N- to C-terminus: tRNA (guanine-N(1)-)-methyltransferase (227 aa).

S-adenosyl-L-methionine is bound by residues Gly-107 and 127–132; that span reads LGDFIL.

Belongs to the RNA methyltransferase TrmD family. Homodimer.

It is found in the cytoplasm. It carries out the reaction guanosine(37) in tRNA + S-adenosyl-L-methionine = N(1)-methylguanosine(37) in tRNA + S-adenosyl-L-homocysteine + H(+). Functionally, specifically methylates guanosine-37 in various tRNAs. This is tRNA (guanine-N(1)-)-methyltransferase from Mesomycoplasma hyopneumoniae (strain 7448) (Mycoplasma hyopneumoniae).